The primary structure comprises 1085 residues: SLIT-ROBO Rho GTPase-activating protein 1 (1085 aa).

An F-BAR domain is found at 19 to 314 (SQVKEIRAQL…AVDNLEPRSD (296 aa)). A coiled-coil region spans residues 351–390 (VQAELMLRYQQLQSRLATLKIENEEVKKTTEATLQTIQDM). Ser-416 bears the Phosphoserine mark. Residues 475-496 (YMTTRPPNVPPKPQKHRKSRPR) form a disordered region. Residues 506–694 (GDLETFVKDS…TIIIHHETIF (189 aa)) form the Rho-GAP domain. The SH3 domain occupies 743–802 (CEPIEAIAKFDYVGRSARELSFKKGASLLLYHRASEDWWEGRHNGIDGLVPHQYIVVQDM). Over residues 808–822 (DTLSQKADSEASSGP) the composition is skewed to polar residues. The interval 808 to 954 (DTLSQKADSE…TGFNDHKPLD (147 aa)) is disordered. A phosphoserine mark is found at Ser-835 and Ser-917. Residues 922–931 (SRHDSLKKID) show a composition bias toward basic and acidic residues. The residue at position 932 (Ser-932) is a Phosphoserine. Positions 937–946 (RSTSSGQYTG) are enriched in polar residues. A coiled-coil region spans residues 956 to 985 (ETIAQDIEETMNTALNELRELERQSTAKHA). A compositionally biased stretch (polar residues) spans 997 to 1011 (KNSPTPATSTESLSP). Disordered regions lie at residues 997 to 1038 (KNSP…MSTF) and 1051 to 1085 (KPPALRPKPAVLPKTNPTIGPAPPPQGPTDKSCTM). Ser-999 is modified (phosphoserine). At Thr-1001 the chain carries Phosphothreonine. The span at 1027–1037 (STSSSSDTMST) shows a compositional bias: low complexity. Ser-1032 carries the post-translational modification Phosphoserine.

As to quaternary structure, homodimer. Forms a heterooligomer with SRGAP2 and SRGAP3 through its F-BAR domain. Interacts with ROBO1, CDC42 and RHOA. Interacts with FASLG. Expressed in brain, lung, kidney, and testis.

Its function is as follows. GTPase-activating protein for RhoA and Cdc42 small GTPases. Together with CDC42 seems to be involved in the pathway mediating the repulsive signaling of Robo and Slit proteins in neuronal migration. SLIT2, probably through interaction with ROBO1, increases the interaction of SRGAP1 with ROBO1 and inactivates CDC42. The sequence is that of SLIT-ROBO Rho GTPase-activating protein 1 (SRGAP1) from Homo sapiens (Human).